The sequence spans 460 residues: Cation efflux system protein CusC (460 aa).

Positions 1–17 (MSPCKLLPFCVALALTG) are cleaved as a signal peptide. The N-palmitoyl cysteine moiety is linked to residue Cys-18. Cys-18 is lipidated: S-diacylglycerol cysteine.

This sequence belongs to the outer membrane factor (OMF) (TC 1.B.17) family. As to quaternary structure, homotrimer. Component of the cus efflux system composed of CusA, CusB, CusC and CusF.

It is found in the cell outer membrane. Functionally, forms pores that allow passive diffusion of cations across the outer membrane. Part of a cation efflux system that mediates resistance to copper and silver. This is Cation efflux system protein CusC (cusC) from Escherichia coli O6:H1 (strain CFT073 / ATCC 700928 / UPEC).